The chain runs to 196 residues: MDQRILNVELRSKTGKGISRQLRRSESIPGVVYGKGIESVSVSLKTKELSNAIAGEGGRNHILTLKGGGSLDGQMVIVADLLQDSLKGLPLHVDLHKINLADKIKVKVKVNLVGTAAGVKEGGLLDFAMHEIEIECLPSHIPEHLDVDVTSLTLGHSIHIGDLKELPGIKVLGDPKASIISVLGRAKEEAAPVAEA.

It belongs to the bacterial ribosomal protein bL25 family. CTC subfamily. Part of the 50S ribosomal subunit; part of the 5S rRNA/L5/L18/L25 subcomplex. Contacts the 5S rRNA. Binds to the 5S rRNA independently of L5 and L18.

Functionally, this is one of the proteins that binds to the 5S RNA in the ribosome where it forms part of the central protuberance. This is Large ribosomal subunit protein bL25 from Geotalea daltonii (strain DSM 22248 / JCM 15807 / FRC-32) (Geobacter daltonii).